Here is a 346-residue protein sequence, read N- to C-terminus: tRNA N6-adenosine threonylcarbamoyltransferase (346 aa).

Residues His111 and His115 each contribute to the Fe cation site. Substrate-binding positions include Leu134–Gly138, Asp167, Gly180, and Asn279. Residue Asp307 participates in Fe cation binding.

The protein belongs to the KAE1 / TsaD family. Fe(2+) is required as a cofactor.

It is found in the cytoplasm. The enzyme catalyses L-threonylcarbamoyladenylate + adenosine(37) in tRNA = N(6)-L-threonylcarbamoyladenosine(37) in tRNA + AMP + H(+). Its function is as follows. Required for the formation of a threonylcarbamoyl group on adenosine at position 37 (t(6)A37) in tRNAs that read codons beginning with adenine. Is involved in the transfer of the threonylcarbamoyl moiety of threonylcarbamoyl-AMP (TC-AMP) to the N6 group of A37, together with TsaE and TsaB. TsaD likely plays a direct catalytic role in this reaction. This chain is tRNA N6-adenosine threonylcarbamoyltransferase, found in Burkholderia cenocepacia (strain HI2424).